Reading from the N-terminus, the 294-residue chain is ATP synthase gamma chain (294 aa).

It belongs to the ATPase gamma chain family. In terms of assembly, F-type ATPases have 2 components, CF(1) - the catalytic core - and CF(0) - the membrane proton channel. CF(1) has five subunits: alpha(3), beta(3), gamma(1), delta(1), epsilon(1). CF(0) has three main subunits: a, b and c.

The protein resides in the cell inner membrane. In terms of biological role, produces ATP from ADP in the presence of a proton gradient across the membrane. The gamma chain is believed to be important in regulating ATPase activity and the flow of protons through the CF(0) complex. In Campylobacter jejuni subsp. jejuni serotype O:6 (strain 81116 / NCTC 11828), this protein is ATP synthase gamma chain.